A 129-amino-acid chain; its full sequence is Small ribosomal subunit protein uS11 (129 aa).

It belongs to the universal ribosomal protein uS11 family. As to quaternary structure, part of the 30S ribosomal subunit. Interacts with proteins S7 and S18. Binds to IF-3.

Its function is as follows. Located on the platform of the 30S subunit, it bridges several disparate RNA helices of the 16S rRNA. Forms part of the Shine-Dalgarno cleft in the 70S ribosome. The protein is Small ribosomal subunit protein uS11 of Symbiobacterium thermophilum (strain DSM 24528 / JCM 14929 / IAM 14863 / T).